Consider the following 280-residue polypeptide: Octanoyltransferase LIP2p2, chloroplastic (280 aa).

The N-terminal 34 residues, 1 to 34 (MVFSVATSSVTNPKLHHHHHLSDFNRNRVSTSLK), are a transit peptide targeting the chloroplast. Residues 81–270 (QECSDSLIIL…EFSEVFQLQM (190 aa)) form the BPL/LPL catalytic domain. Substrate contacts are provided by residues 123–130 (RGGEVTYH), 191–193 (AIG), and 204–206 (GLA). Cysteine 222 functions as the Acyl-thioester intermediate in the catalytic mechanism.

It belongs to the LipB family. As to expression, expressed in roots, leaves, cauline leaves, stems, siliques and flowers.

The protein localises to the plastid. Its subcellular location is the chloroplast. It catalyses the reaction octanoyl-[ACP] + L-lysyl-[protein] = N(6)-octanoyl-L-lysyl-[protein] + holo-[ACP] + H(+). It participates in protein modification; protein lipoylation via endogenous pathway; protein N(6)-(lipoyl)lysine from octanoyl-[acyl-carrier-protein]: step 1/2. In terms of biological role, catalyzes the transfer of endogenously produced octanoic acid from octanoyl-acyl-carrier-protein onto the lipoyl domains of lipoate-dependent enzymes. Lipoyl-ACP can also act as a substrate although octanoyl-ACP is likely to be the physiological substrate. Together with LIP1P is essential for de novo plastidial protein lipoylation during seed development. Acts redundantly with LIP2P. This Arabidopsis thaliana (Mouse-ear cress) protein is Octanoyltransferase LIP2p2, chloroplastic.